A 93-amino-acid chain; its full sequence is Parbolysin P2 (93 aa).

2 disulfide bridges follow: Cys-16–Cys-37 and Cys-22–Cys-33.

It belongs to the worm cytolysin family. In terms of tissue distribution, localized within the skin and proboscis and are most readily isolated from body mucus secretions.

Its subcellular location is the secreted. Cytolysin that shows hemolytic activity (on bovine erythrocytes, HC(50)=5.75 mg/ml). This hemolytic activity is completely inhibited by small unilamelar vesicles composed of PC/PG, PC/PI and PC/PS in 1:1 molar ratios (with at least 100 mg/ml concentration). This Parborlasia corrugatus (Antarctic nemertean worm) protein is Parbolysin P2.